Reading from the N-terminus, the 302-residue chain is Sulfate adenylyltransferase subunit 2 (302 aa).

This sequence belongs to the PAPS reductase family. CysD subfamily. In terms of assembly, heterodimer composed of CysD, the smaller subunit, and CysN.

The catalysed reaction is sulfate + ATP + H(+) = adenosine 5'-phosphosulfate + diphosphate. Its pathway is sulfur metabolism; hydrogen sulfide biosynthesis; sulfite from sulfate: step 1/3. Its function is as follows. With CysN forms the ATP sulfurylase (ATPS) that catalyzes the adenylation of sulfate producing adenosine 5'-phosphosulfate (APS) and diphosphate, the first enzymatic step in sulfur assimilation pathway. APS synthesis involves the formation of a high-energy phosphoric-sulfuric acid anhydride bond driven by GTP hydrolysis by CysN coupled to ATP hydrolysis by CysD. This is Sulfate adenylyltransferase subunit 2 from Shigella boydii serotype 4 (strain Sb227).